Consider the following 535-residue polypeptide: Phosphoenolpyruvate carboxykinase (ATP) (535 aa).

Substrate-binding residues include R59, Y201, and K207. Residues K207, H226, and 243–251 (GLSGTGKTT) each bind ATP. Mn(2+) is bound by residues K207 and H226. Residue D264 coordinates Mn(2+). ATP is bound by residues E292, R328, 444 to 445 (RI), and T450. Residue R328 participates in substrate binding.

The protein belongs to the phosphoenolpyruvate carboxykinase (ATP) family. The cofactor is Mn(2+).

The protein localises to the cytoplasm. The enzyme catalyses oxaloacetate + ATP = phosphoenolpyruvate + ADP + CO2. Its pathway is carbohydrate biosynthesis; gluconeogenesis. Involved in the gluconeogenesis. Catalyzes the conversion of oxaloacetate (OAA) to phosphoenolpyruvate (PEP) through direct phosphoryl transfer between the nucleoside triphosphate and OAA. The protein is Phosphoenolpyruvate carboxykinase (ATP) of Bacteroides fragilis (strain ATCC 25285 / DSM 2151 / CCUG 4856 / JCM 11019 / LMG 10263 / NCTC 9343 / Onslow / VPI 2553 / EN-2).